Reading from the N-terminus, the 204-residue chain is Large ribosomal subunit protein uL4 (204 aa).

Residues Lys-49–Ser-76 form a disordered region.

The protein belongs to the universal ribosomal protein uL4 family. Part of the 50S ribosomal subunit.

Functionally, one of the primary rRNA binding proteins, this protein initially binds near the 5'-end of the 23S rRNA. It is important during the early stages of 50S assembly. It makes multiple contacts with different domains of the 23S rRNA in the assembled 50S subunit and ribosome. In terms of biological role, forms part of the polypeptide exit tunnel. The chain is Large ribosomal subunit protein uL4 from Wolbachia pipientis wMel.